A 122-amino-acid polypeptide reads, in one-letter code: Large ribosomal subunit protein uL14 (122 aa).

The protein belongs to the universal ribosomal protein uL14 family. As to quaternary structure, part of the 50S ribosomal subunit. Forms a cluster with proteins L3 and L19. In the 70S ribosome, L14 and L19 interact and together make contacts with the 16S rRNA in bridges B5 and B8.

In terms of biological role, binds to 23S rRNA. Forms part of two intersubunit bridges in the 70S ribosome. In Nitrosomonas eutropha (strain DSM 101675 / C91 / Nm57), this protein is Large ribosomal subunit protein uL14.